The chain runs to 203 residues: Protein GrpE (203 aa).

The span at 1-20 (MSSKEQNVHEEQVSKEKEGM) shows a compositional bias: basic and acidic residues. Residues 1 to 38 (MSSKEQNVHEEQVSKEKEGMESVMNESQEQVKSEDAQA) are disordered.

This sequence belongs to the GrpE family. As to quaternary structure, homodimer.

The protein localises to the cytoplasm. Its function is as follows. Participates actively in the response to hyperosmotic and heat shock by preventing the aggregation of stress-denatured proteins, in association with DnaK and GrpE. It is the nucleotide exchange factor for DnaK and may function as a thermosensor. Unfolded proteins bind initially to DnaJ; upon interaction with the DnaJ-bound protein, DnaK hydrolyzes its bound ATP, resulting in the formation of a stable complex. GrpE releases ADP from DnaK; ATP binding to DnaK triggers the release of the substrate protein, thus completing the reaction cycle. Several rounds of ATP-dependent interactions between DnaJ, DnaK and GrpE are required for fully efficient folding. This chain is Protein GrpE, found in Proteus mirabilis (strain HI4320).